We begin with the raw amino-acid sequence, 482 residues long: Succinate-semialdehyde dehydrogenase [NADP(+)] GabD (482 aa).

NADP(+) contacts are provided by residues tryptophan 156–asparagine 157, lysine 180–serine 183, and glycine 233–serine 234. Glutamate 255 (proton acceptor) is an active-site residue. Leucine 256 is an NADP(+) binding site. Cysteine 289 acts as the Nucleophile in catalysis. Position 386 (glutamate 386) interacts with NADP(+).

This sequence belongs to the aldehyde dehydrogenase family. Homotetramer.

The catalysed reaction is succinate semialdehyde + NADP(+) + H2O = succinate + NADPH + 2 H(+). It carries out the reaction 5-oxopentanoate + NADP(+) + H2O = glutarate + NADPH + 2 H(+). It functions in the pathway amino-acid degradation; 4-aminobutanoate degradation. The protein operates within amino-acid degradation. Its function is as follows. Catalyzes the NADP(+)-dependent oxidation of succinate semialdehyde to succinate. Thereby functions in a GABA degradation pathway that allows some E.coli strains to utilize GABA as a nitrogen source for growth. Also catalyzes the conversion of glutarate semialdehyde to glutarate, as part of a L-lysine degradation pathway that proceeds via cadaverine, glutarate and L-2-hydroxyglutarate. The protein is Succinate-semialdehyde dehydrogenase [NADP(+)] GabD (gabD) of Escherichia coli (strain K12).